The primary structure comprises 286 residues: Small ribosomal subunit protein uS3 (286 aa).

Residues 39 to 107 (VREYLKKKLA…PVHVNIEEIR (69 aa)) enclose the KH type-2 domain. The disordered stretch occupies residues 213–286 (QAGAGTAAPQ…KPGVNDAAAS (74 aa)). Basic and acidic residues predominate over residues 241–262 (GRADARSDGKAGEKKGPRKSDN).

Belongs to the universal ribosomal protein uS3 family. In terms of assembly, part of the 30S ribosomal subunit. Forms a tight complex with proteins S10 and S14.

Functionally, binds the lower part of the 30S subunit head. Binds mRNA in the 70S ribosome, positioning it for translation. The polypeptide is Small ribosomal subunit protein uS3 (Nitrosospira multiformis (strain ATCC 25196 / NCIMB 11849 / C 71)).